Here is a 314-residue protein sequence, read N- to C-terminus: R2-like ligand binding oxidase (314 aa).

Mn(2+) is bound by residues glutamate 68, glutamate 101, and histidine 104. The 3-(O4'-tyrosyl)-valine (Val-Tyr) cross-link spans valine 71–tyrosine 162. Glutamate 101 contacts Fe cation. 3 residues coordinate Fe cation: glutamate 167, glutamate 202, and histidine 205.

This sequence belongs to the ribonucleoside diphosphate reductase small chain family. R2-like ligand binding oxidase subfamily. Homodimer. The cofactor is Fe cation. Mn(2+) is required as a cofactor.

Its function is as follows. Probable oxidase that might be involved in lipid metabolism. This chain is R2-like ligand binding oxidase, found in Mycobacterium bovis (strain ATCC BAA-935 / AF2122/97).